The sequence spans 581 residues: Threonine--tRNA ligase (581 aa).

The segment at 185 to 478 (DHRKLGKELD…LVEHYGGAFP (294 aa)) is catalytic. The Zn(2+) site is built by cysteine 278, histidine 329, and histidine 455.

It belongs to the class-II aminoacyl-tRNA synthetase family. As to quaternary structure, homodimer. Zn(2+) is required as a cofactor.

The protein localises to the cytoplasm. It catalyses the reaction tRNA(Thr) + L-threonine + ATP = L-threonyl-tRNA(Thr) + AMP + diphosphate + H(+). Its function is as follows. Catalyzes the attachment of threonine to tRNA(Thr) in a two-step reaction: L-threonine is first activated by ATP to form Thr-AMP and then transferred to the acceptor end of tRNA(Thr). Also edits incorrectly charged L-seryl-tRNA(Thr). This Borreliella burgdorferi (strain ATCC 35210 / DSM 4680 / CIP 102532 / B31) (Borrelia burgdorferi) protein is Threonine--tRNA ligase.